A 939-amino-acid polypeptide reads, in one-letter code: Protein translocase subunit SecA (939 aa).

ATP-binding positions include Gln85, 103 to 107, and Asp504; that span reads GEGKT. Positions 850–939 are disordered; sequence PVQDGAERPS…KGGGGRRRKK (90 aa). Residues 854 to 864 show a composition bias toward basic and acidic residues; the sequence is GAERPSLEKEG. Positions 924-939 are enriched in basic residues; that stretch reads ERRKAQKGGGGRRRKK.

It belongs to the SecA family. As to quaternary structure, monomer and homodimer. Part of the essential Sec protein translocation apparatus which comprises SecA, SecYEG and auxiliary proteins SecDF. Other proteins may also be involved.

Its subcellular location is the cell membrane. It localises to the cytoplasm. The enzyme catalyses ATP + H2O + cellular proteinSide 1 = ADP + phosphate + cellular proteinSide 2.. Its function is as follows. Part of the Sec protein translocase complex. Interacts with the SecYEG preprotein conducting channel. Has a central role in coupling the hydrolysis of ATP to the transfer of proteins into and across the cell membrane, serving as an ATP-driven molecular motor driving the stepwise translocation of polypeptide chains across the membrane. The protein is Protein translocase subunit SecA of Streptomyces griseus subsp. griseus (strain JCM 4626 / CBS 651.72 / NBRC 13350 / KCC S-0626 / ISP 5235).